A 158-amino-acid chain; its full sequence is MALSADIVGMHYRYPDHYEVEREKIREYAVAVQNDDAWYFEEDGAAELGYKGLLAPLTFICVFGYKAQAAFFKHANIATAEAQIVQVDQVLKFEKPIVAGDKLYCDVYVDSVREAHGTQIIVTKNIVTNEEGDLVQETYTTLAGRAGEDGEGFSDGAA.

This sequence belongs to the UPF0336 family.

In Mycobacterium bovis (strain ATCC BAA-935 / AF2122/97), this protein is UPF0336 protein Mb0654.